The following is a 166-amino-acid chain: MRALYPGSFDPVTFGHLDLIQRASQLFDEVIVAVLRNPNKQPSFSLEERLEQLSSVTSHLPQVRVTSFEGLTVHFALEQDARVILRGLRALSDFEFELQLAHTNASLSGQVDTLFMATAVPHSFLSSSVVKEVARFGGDVQHLVPETVAIDLRRLFNQRVDVGGDR.

Residue Ser-8 coordinates substrate. ATP-binding positions include Ser-8–Phe-9 and His-16. 3 residues coordinate substrate: Lys-40, Thr-72, and Arg-86. Residues Gly-87–Arg-89, Glu-97, and His-122–Ser-128 each bind ATP.

The protein belongs to the bacterial CoaD family. Homohexamer. Mg(2+) is required as a cofactor.

The protein resides in the cytoplasm. The enzyme catalyses (R)-4'-phosphopantetheine + ATP + H(+) = 3'-dephospho-CoA + diphosphate. The protein operates within cofactor biosynthesis; coenzyme A biosynthesis; CoA from (R)-pantothenate: step 4/5. Functionally, reversibly transfers an adenylyl group from ATP to 4'-phosphopantetheine, yielding dephospho-CoA (dPCoA) and pyrophosphate. This chain is Phosphopantetheine adenylyltransferase, found in Synechococcus sp. (strain RCC307).